We begin with the raw amino-acid sequence, 23 residues long: Dahlein-4.2 (23 aa).

Expressed by the skin dorsal glands.

It localises to the secreted. Its function is as follows. Has no antimicrobial activity. The protein is Dahlein-4.2 of Ranoidea dahlii (Dahl's aquatic frog).